A 100-amino-acid polypeptide reads, in one-letter code: Small ribosomal subunit protein bS21 (100 aa).

A compositionally biased stretch (basic and acidic residues) spans 37-52 (EKPSEKKAREKAEAVR). Residues 37 to 100 (EKPSEKKARE…GAGAGPRGPR (64 aa)) are disordered. Over residues 53–62 (RARKLARKKL) the composition is skewed to basic residues. A compositionally biased stretch (gly residues) spans 84 to 100 (GAAGAGAGAGAGPRGPR).

This sequence belongs to the bacterial ribosomal protein bS21 family.

The chain is Small ribosomal subunit protein bS21 from Rhodopseudomonas palustris (strain BisB5).